We begin with the raw amino-acid sequence, 151 residues long: Nucleoside diphosphate kinase (151 aa).

Residues lysine 10, phenylalanine 58, arginine 86, threonine 92, arginine 103, and asparagine 113 each coordinate ATP. Catalysis depends on histidine 116, which acts as the Pros-phosphohistidine intermediate.

Belongs to the NDK family. As to quaternary structure, homotetramer. The cofactor is Mg(2+).

It localises to the cytoplasm. It carries out the reaction dZDP + ATP = dZTP + ADP. The enzyme catalyses a 2'-deoxyribonucleoside 5'-diphosphate + ATP = a 2'-deoxyribonucleoside 5'-triphosphate + ADP. The catalysed reaction is a ribonucleoside 5'-diphosphate + ATP = a ribonucleoside 5'-triphosphate + ADP. It functions in the pathway purine metabolism. Functionally, major role in the synthesis of nucleoside triphosphates other than ATP. The ATP gamma phosphate is transferred to the NDP beta phosphate via a ping-pong mechanism, using a phosphorylated active-site intermediate. (Microbial infection) Catalyzes the phosphorylation of dZDP to dZTP, when the bacterium is infected by a phage that produces the substrate for the synthesis of dZTP (2- amino-2'-deoxyadenosine 5'-triphosphate), which is then used by the phage as a DNA polymerase substrate. The protein is Nucleoside diphosphate kinase of Synechococcus sp. (strain CC9605).